The sequence spans 127 residues: C-C motif chemokine 28 (127 aa).

The signal sequence occupies residues 1–19; it reads MQQRGLAIVALAVCAALHA. 2 cysteine pairs are disulfide-bonded: C30-C58 and C31-C73. N78 is a glycosylation site (N-linked (GlcNAc...) asparagine). The span at 92–115 shows a compositional bias: basic residues; the sequence is KNGKGNVCHRKKHHGKRNSNRAHQ. The interval 92-127 is disordered; it reads KNGKGNVCHRKKHHGKRNSNRAHQGKHETYGHKTPY. Residues 116 to 127 show a composition bias toward basic and acidic residues; it reads GKHETYGHKTPY.

This sequence belongs to the intercrine beta (chemokine CC) family. As to expression, preferentially expressed by epithelial cells of diverse tissues including normal and pathological colon, salivary gland, mammary gland, trachea and rectum. Also found in prostate, spleen, thyroid, psoriasis skin and in lower levels in peripheral blood leukocytes, small intestine, Peyer patches, stomach and normal skin.

Its subcellular location is the secreted. Functionally, chemotactic activity for resting CD4, CD8 T-cells and eosinophils. Binds to CCR3 and CCR10 and induces calcium mobilization in a dose-dependent manner. The sequence is that of C-C motif chemokine 28 (CCL28) from Homo sapiens (Human).